The chain runs to 290 residues: Pirin (290 aa).

Fe cation-binding residues include H56, H58, H101, and E103.

This sequence belongs to the pirin family. As to quaternary structure, may interact with NF1/CTF1. Interacts with BCL3. Identified in a complex comprised of PIR, BLC3, NFKB1 and target DNA. Fe cation is required as a cofactor. In terms of tissue distribution, weakly expressed in bone marrow.

The protein localises to the nucleus. The protein resides in the cytoplasm. The enzyme catalyses quercetin + O2 = 2-(3,4-dihydroxybenzoyloxy)-4,6-dihydroxybenzoate + CO. It functions in the pathway flavonoid metabolism; quercetin degradation. In terms of biological role, transcriptional coregulator of NF-kappa-B which facilitates binding of NF-kappa-B proteins to target kappa-B genes in a redox-state-dependent manner. May be required for efficient terminal myeloid maturation of hematopoietic cells. Has quercetin 2,3-dioxygenase activity (in vitro). The sequence is that of Pirin (Pir) from Mus musculus (Mouse).